The sequence spans 556 residues: MPVVEVKLWDLERLTGASLDESTVRDLLPRLKCEVEEVSGEDVVYEATHDRPDLYSAELLSVYLKGLLGVEDGLPRPRVGSAEGVAEVEGPAYRPYAFFAVVRGVSLDDEAIRQLMQLQEKVHLTYGRNRRKVSIGLYDLDGIKLPVRYVAASPETRMKPLGFAIEMTLREVLEKHPKGVEYGHLVKGHGEYPLIVDAEGKVVSFPPITNSEDFRVTESTRDVLIDVTSTDPEAGRRIISLFAHAVAVRGGEVRPLRLKGALDEESPRMEPEEVVYDVSMNRDLLGLDLGVEETVRLLRAMRMDAEPAGNGKVAVRYPYFRVDILHPVDIAEEVAMGYGYERIEPAVIPPLHPGREDPIEVFTRALREGMVGLGFVEVNNYMMTSASLMFDAMLLPRQPIVEVENPRHEAYHALRTWIVPQLLRLMSSSKHAGYPQRVFEAGDVAIPDESRDNRVREERRLAFAVAGKGVTLTDGLAALKGLFRQLGVSFKLEKAEHPSFIAGRVARVVTEAGDAGIVGEVHPQVLVNFGLEVPVVAGELNVEVVMKCYLARLGGA.

One can recognise a B5 domain in the interval 269-345; it reads MEPEEVVYDV…MGYGYERIEP (77 aa). The Mg(2+) site is built by D323, D329, E332, and E333.

This sequence belongs to the phenylalanyl-tRNA synthetase beta subunit family. Type 2 subfamily. In terms of assembly, tetramer of two alpha and two beta subunits. The cofactor is Mg(2+).

It is found in the cytoplasm. It carries out the reaction tRNA(Phe) + L-phenylalanine + ATP = L-phenylalanyl-tRNA(Phe) + AMP + diphosphate + H(+). The polypeptide is Phenylalanine--tRNA ligase beta subunit (Thermofilum pendens (strain DSM 2475 / Hrk 5)).